We begin with the raw amino-acid sequence, 359 residues long: Dihydroorotate dehydrogenase (quinone) (359 aa).

FMN-binding positions include 68 to 72 (AGFDK) and Ala92. Lys72 lines the substrate pocket. 117–121 (NAYGF) is a substrate binding site. The FMN site is built by Asn146 and Asn179. A substrate-binding site is contributed by Asn179. Ser182 acts as the Nucleophile in catalysis. A substrate-binding site is contributed by Asn184. Residues Lys215 and Thr243 each contribute to the FMN site. 244 to 245 (NT) contributes to the substrate binding site. FMN is bound by residues Gly263, Gly292, and 313-314 (YT).

This sequence belongs to the dihydroorotate dehydrogenase family. Type 2 subfamily. As to quaternary structure, monomer. It depends on FMN as a cofactor.

The protein localises to the cell membrane. It catalyses the reaction (S)-dihydroorotate + a quinone = orotate + a quinol. It participates in pyrimidine metabolism; UMP biosynthesis via de novo pathway; orotate from (S)-dihydroorotate (quinone route): step 1/1. Functionally, catalyzes the conversion of dihydroorotate to orotate with quinone as electron acceptor. The chain is Dihydroorotate dehydrogenase (quinone) from Nautilia profundicola (strain ATCC BAA-1463 / DSM 18972 / AmH).